A 123-amino-acid chain; its full sequence is Small ribosomal subunit protein uS12c (123 aa).

This sequence belongs to the universal ribosomal protein uS12 family. As to quaternary structure, part of the 30S ribosomal subunit.

It is found in the plastid. The protein resides in the chloroplast. Functionally, with S4 and S5 plays an important role in translational accuracy. Located at the interface of the 30S and 50S subunits. This is Small ribosomal subunit protein uS12c (rps12) from Chlorella vulgaris (Green alga).